The sequence spans 300 residues: Ribosomal RNA small subunit methyltransferase H (300 aa).

Residues 35–37, aspartate 55, phenylalanine 82, aspartate 100, and glutamine 107 each bind S-adenosyl-L-methionine; that span reads GGH.

Belongs to the methyltransferase superfamily. RsmH family.

It localises to the cytoplasm. It catalyses the reaction cytidine(1402) in 16S rRNA + S-adenosyl-L-methionine = N(4)-methylcytidine(1402) in 16S rRNA + S-adenosyl-L-homocysteine + H(+). In terms of biological role, specifically methylates the N4 position of cytidine in position 1402 (C1402) of 16S rRNA. This Chlamydia trachomatis serovar A (strain ATCC VR-571B / DSM 19440 / HAR-13) protein is Ribosomal RNA small subunit methyltransferase H.